The following is a 133-amino-acid chain: MPSSAPSQRQLRVGEQARHALSDVLQREDMRDPALEGAVISVSEVRMSPDLKIATVFVSPLSGDKEAIIAALNRHARYIRGRVSPALRQMKYMPEFRFHLDTSYENFEKIDRILRSPEVARDLGDADDEDDNG.

This sequence belongs to the RbfA family. In terms of assembly, monomer. Binds 30S ribosomal subunits, but not 50S ribosomal subunits or 70S ribosomes.

It is found in the cytoplasm. In terms of biological role, one of several proteins that assist in the late maturation steps of the functional core of the 30S ribosomal subunit. Associates with free 30S ribosomal subunits (but not with 30S subunits that are part of 70S ribosomes or polysomes). Required for efficient processing of 16S rRNA. May interact with the 5'-terminal helix region of 16S rRNA. This Chelativorans sp. (strain BNC1) protein is Ribosome-binding factor A.